The sequence spans 637 residues: Chaperone protein DnaK (637 aa).

Thr198 is modified (phosphothreonine; by autocatalysis). The segment at 597–637 is disordered; it reads MYQQQAEGDAARDAAQDAAKDDVVDAEFTEVDDDKNDKKSA. The segment covering 605–619 has biased composition (basic and acidic residues); it reads DAARDAAQDAAKDDV. Positions 620–630 are enriched in acidic residues; that stretch reads VDAEFTEVDDD.

The protein belongs to the heat shock protein 70 family.

Its function is as follows. Acts as a chaperone. The polypeptide is Chaperone protein DnaK (Afipia carboxidovorans (strain ATCC 49405 / DSM 1227 / KCTC 32145 / OM5) (Oligotropha carboxidovorans)).